The following is a 428-amino-acid chain: Enolase (428 aa).

Residue Gln-163 participates in (2R)-2-phosphoglycerate binding. Glu-205 serves as the catalytic Proton donor. Residues Asp-242, Glu-285, and Asp-312 each coordinate Mg(2+). The (2R)-2-phosphoglycerate site is built by Lys-337, Arg-366, Ser-367, and Lys-388. Lys-337 (proton acceptor) is an active-site residue.

It belongs to the enolase family. It depends on Mg(2+) as a cofactor.

Its subcellular location is the cytoplasm. It localises to the secreted. The protein resides in the cell surface. The enzyme catalyses (2R)-2-phosphoglycerate = phosphoenolpyruvate + H2O. The protein operates within carbohydrate degradation; glycolysis; pyruvate from D-glyceraldehyde 3-phosphate: step 4/5. Catalyzes the reversible conversion of 2-phosphoglycerate (2-PG) into phosphoenolpyruvate (PEP). It is essential for the degradation of carbohydrates via glycolysis. The chain is Enolase from Erythrobacter litoralis (strain HTCC2594).